A 573-amino-acid polypeptide reads, in one-letter code: Proline--tRNA ligase (573 aa).

It belongs to the class-II aminoacyl-tRNA synthetase family. ProS type 1 subfamily. In terms of assembly, homodimer.

Its subcellular location is the cytoplasm. It carries out the reaction tRNA(Pro) + L-proline + ATP = L-prolyl-tRNA(Pro) + AMP + diphosphate. Its function is as follows. Catalyzes the attachment of proline to tRNA(Pro) in a two-step reaction: proline is first activated by ATP to form Pro-AMP and then transferred to the acceptor end of tRNA(Pro). As ProRS can inadvertently accommodate and process non-cognate amino acids such as alanine and cysteine, to avoid such errors it has two additional distinct editing activities against alanine. One activity is designated as 'pretransfer' editing and involves the tRNA(Pro)-independent hydrolysis of activated Ala-AMP. The other activity is designated 'posttransfer' editing and involves deacylation of mischarged Ala-tRNA(Pro). The misacylated Cys-tRNA(Pro) is not edited by ProRS. The chain is Proline--tRNA ligase from Cupriavidus necator (strain ATCC 17699 / DSM 428 / KCTC 22496 / NCIMB 10442 / H16 / Stanier 337) (Ralstonia eutropha).